Consider the following 55-residue polypeptide: Large ribosomal subunit protein bL33 (55 aa).

Belongs to the bacterial ribosomal protein bL33 family.

This Novosphingobium aromaticivorans (strain ATCC 700278 / DSM 12444 / CCUG 56034 / CIP 105152 / NBRC 16084 / F199) protein is Large ribosomal subunit protein bL33.